The chain runs to 376 residues: D-alanine--D-alanine ligase (376 aa).

The region spanning 153-366 (KLLLAGQGLP…YPELVHRLIQ (214 aa)) is the ATP-grasp domain. Residue 185-240 (VEALGYPVFVKPARAGSSIGITRVTSREGLAAAVAEAVSHDPKVVVEAALVGREIE) coordinates ATP. 3 residues coordinate Mg(2+): Asp317, Glu333, and Asn335.

This sequence belongs to the D-alanine--D-alanine ligase family. Requires Mg(2+) as cofactor. It depends on Mn(2+) as a cofactor.

Its subcellular location is the cytoplasm. The enzyme catalyses 2 D-alanine + ATP = D-alanyl-D-alanine + ADP + phosphate + H(+). The protein operates within cell wall biogenesis; peptidoglycan biosynthesis. Functionally, cell wall formation. The protein is D-alanine--D-alanine ligase of Kineococcus radiotolerans (strain ATCC BAA-149 / DSM 14245 / SRS30216).